The primary structure comprises 126 residues: Glycine cleavage system H protein (126 aa).

Residues 23–104 enclose the Lipoyl-binding domain; it reads TLTVGITDHA…PYDNWLFKIK (82 aa). The residue at position 64 (K64) is an N6-lipoyllysine.

Belongs to the GcvH family. As to quaternary structure, the glycine cleavage system is composed of four proteins: P, T, L and H. (R)-lipoate is required as a cofactor.

The glycine cleavage system catalyzes the degradation of glycine. The H protein shuttles the methylamine group of glycine from the P protein to the T protein. This Paraburkholderia phymatum (strain DSM 17167 / CIP 108236 / LMG 21445 / STM815) (Burkholderia phymatum) protein is Glycine cleavage system H protein.